A 723-amino-acid polypeptide reads, in one-letter code: Probable inactive serine/threonine-protein kinase fnkD (723 aa).

The Protein kinase domain occupies 33-276 (WEIITQLESN…TTSLPKYSTL (244 aa)). FNIP repeat units lie at residues 301–342 (FNQP…ELAS), 343–384 (FNQT…LLSS), 385–426 (FNQP…SLAS), 524–565 (FNQS…ILPS), 566–606 (FNHP…LGDE), and 647–690 (FNIE…FGIT).

It belongs to the protein kinase superfamily. STE Ser/Thr protein kinase family.

This Dictyostelium discoideum (Social amoeba) protein is Probable inactive serine/threonine-protein kinase fnkD (fnkD-1).